Here is a 622-residue protein sequence, read N- to C-terminus: Polypeptide N-acetylgalactosaminyltransferase 6 (622 aa).

The Cytoplasmic portion of the chain corresponds to 1-8; it reads MRLLRRRH. A helical; Signal-anchor for type II membrane protein transmembrane segment spans residues 9-28; it reads MSLRLAMLGSVFMLFLFIRQ. The Lumenal segment spans residues 29 to 622; it reads KDVSNQEQAM…RDPYQLWLFV (594 aa). A glycan (N-linked (GlcNAc...) asparagine) is linked at Asn86. Residues 176–285 are catalytic subdomain A; sequence LPTTSVIIVF…HGWLEPLLAR (110 aa). Asp269, His271, and His407 together coordinate Mn(2+). Positions 348-410 are catalytic subdomain B; sequence PIKSPTFAGG…PCSVVGHVFR (63 aa). The N-linked (GlcNAc...) asparagine glycan is linked to Asn476. A Ricin B-type lectin domain is found at 506-622; the sequence is TNQCLDVGEN…RDPYQLWLFV (117 aa). Cysteines 509 and 527 form a disulfide. Asp511, Glu514, His528, and Asn533 together coordinate UDP-N-acetyl-alpha-D-galactosamine. Cystine bridges form between Cys553/Cys566 and Cys597/Cys610.

The protein belongs to the glycosyltransferase 2 family. GalNAc-T subfamily. Requires Mn(2+) as cofactor.

The protein resides in the golgi apparatus membrane. The enzyme catalyses L-seryl-[protein] + UDP-N-acetyl-alpha-D-galactosamine = a 3-O-[N-acetyl-alpha-D-galactosaminyl]-L-seryl-[protein] + UDP + H(+). The catalysed reaction is L-threonyl-[protein] + UDP-N-acetyl-alpha-D-galactosamine = a 3-O-[N-acetyl-alpha-D-galactosaminyl]-L-threonyl-[protein] + UDP + H(+). It participates in protein modification; protein glycosylation. Catalyzes the initial reaction in O-linked oligosaccharide biosynthesis, the transfer of an N-acetyl-D-galactosamine residue to a serine or threonine residue on the protein receptor. May participate in synthesis of oncofetal fibronectin. Has activity toward Muc1a, Muc2, EA2 and fibronectin peptides. In Mus musculus (Mouse), this protein is Polypeptide N-acetylgalactosaminyltransferase 6 (Galnt6).